We begin with the raw amino-acid sequence, 372 residues long: Putative glutamate--cysteine ligase 2 (372 aa).

This sequence belongs to the glutamate--cysteine ligase type 2 family. YbdK subfamily.

The catalysed reaction is L-cysteine + L-glutamate + ATP = gamma-L-glutamyl-L-cysteine + ADP + phosphate + H(+). Functionally, ATP-dependent carboxylate-amine ligase which exhibits weak glutamate--cysteine ligase activity. This is Putative glutamate--cysteine ligase 2 from Rhodopirellula baltica (strain DSM 10527 / NCIMB 13988 / SH1).